Consider the following 324-residue polypeptide: Signal peptidase I (324 aa).

M1 is modified (blocked amino end (Met)). The Periplasmic segment spans residues 1 to 3; that stretch reads MAN. A helical membrane pass occupies residues 4-22; sequence MFALILVIATLVTGILWCV. At 23-58 the chain is on the cytoplasmic side; that stretch reads DKFFFAPKRRERQAAAQAAAGDSLDKATLKKVAPKP. Residues 59–77 traverse the membrane as a helical segment; the sequence is GWLETGASVFPVLAIVLIV. Residues 78-324 are Periplasmic-facing; that stretch reads RSFIYEPFQI…LRLSRIGGIH (247 aa). Active-site residues include S91 and K146. An intrachain disulfide couples C171 to C177.

This sequence belongs to the peptidase S26 family.

The protein resides in the cell inner membrane. It catalyses the reaction Cleavage of hydrophobic, N-terminal signal or leader sequences from secreted and periplasmic proteins.. The polypeptide is Signal peptidase I (lepB) (Escherichia coli (strain K12)).